A 477-amino-acid polypeptide reads, in one-letter code: ACT domain-containing protein ACR1 (477 aa).

ACT domains are found at residues 38–124, 134–214, 283–358, and 361–441; these read LIKV…REVQ, AFEI…GDVS, MVNV…RASQ, and KLEI…MMPR. The Bipartite nuclear localization signal motif lies at 329–345; that stretch reads KKNGGTLETEGQRERLR.

As to expression, expressed in flowers and siliques.

The protein resides in the nucleus. Its function is as follows. May bind amino acids. The polypeptide is ACT domain-containing protein ACR1 (Arabidopsis thaliana (Mouse-ear cress)).